Consider the following 143-residue polypeptide: Large ribosomal subunit protein uL11 (143 aa).

The protein belongs to the universal ribosomal protein uL11 family. Part of the ribosomal stalk of the 50S ribosomal subunit. Interacts with L10 and the large rRNA to form the base of the stalk. L10 forms an elongated spine to which L12 dimers bind in a sequential fashion forming a multimeric L10(L12)X complex. Post-translationally, one or more lysine residues are methylated.

Functionally, forms part of the ribosomal stalk which helps the ribosome interact with GTP-bound translation factors. The protein is Large ribosomal subunit protein uL11 of Bordetella parapertussis (strain 12822 / ATCC BAA-587 / NCTC 13253).